Consider the following 497-residue polypeptide: Ethanolamine-phosphate phospho-lyase (497 aa).

Lys-278 bears the N6-(pyridoxal phosphate)lysine mark. The tract at residues Thr-440–Thr-497 is disordered. A compositionally biased stretch (basic and acidic residues) spans Met-458–Ser-479.

This sequence belongs to the class-III pyridoxal-phosphate-dependent aminotransferase family. Homotetramer. It depends on pyridoxal 5'-phosphate as a cofactor.

Its subcellular location is the mitochondrion. It catalyses the reaction phosphoethanolamine + H2O = acetaldehyde + NH4(+) + phosphate. Its function is as follows. Catalyzes the pyridoxal-phosphate-dependent breakdown of phosphoethanolamine, converting it to ammonia, inorganic phosphate and acetaldehyde. The protein is Ethanolamine-phosphate phospho-lyase (ETNPPL) of Bos taurus (Bovine).